The primary structure comprises 114 residues: Large ribosomal subunit protein uL22 (114 aa).

This sequence belongs to the universal ribosomal protein uL22 family. In terms of assembly, part of the 50S ribosomal subunit.

Its function is as follows. This protein binds specifically to 23S rRNA; its binding is stimulated by other ribosomal proteins, e.g. L4, L17, and L20. It is important during the early stages of 50S assembly. It makes multiple contacts with different domains of the 23S rRNA in the assembled 50S subunit and ribosome. In terms of biological role, the globular domain of the protein is located near the polypeptide exit tunnel on the outside of the subunit, while an extended beta-hairpin is found that lines the wall of the exit tunnel in the center of the 70S ribosome. The chain is Large ribosomal subunit protein uL22 from Streptococcus pyogenes serotype M5 (strain Manfredo).